A 96-amino-acid chain; its full sequence is Putative membrane protein insertion efficiency factor (96 aa).

Residues 68 to 96 (DPVPEHFPARHPRPQGSPPTDHPPTDQPS) are disordered. Residues 82-96 (QGSPPTDHPPTDQPS) show a composition bias toward pro residues.

This sequence belongs to the UPF0161 family.

The protein localises to the cell membrane. Functionally, could be involved in insertion of integral membrane proteins into the membrane. This Deinococcus radiodurans (strain ATCC 13939 / DSM 20539 / JCM 16871 / CCUG 27074 / LMG 4051 / NBRC 15346 / NCIMB 9279 / VKM B-1422 / R1) protein is Putative membrane protein insertion efficiency factor.